Here is a 67-residue protein sequence, read N- to C-terminus: Conotoxin mr3d (67 aa).

A signal peptide spans 1–19 (MSKLGILLTICLLLFPLTA). Positions 20–52 (VPLDGDQPADRPAERMQDDISSEHHPFFDPVKR) are excised as a propeptide. Intrachain disulfides connect Cys-53–Cys-65, Cys-54–Cys-62, and Cys-58–Cys-66. Residue Pro-64 is modified to 4-hydroxyproline; partial. Cys-66 carries the cysteine amide; partial modification.

The protein belongs to the conotoxin M superfamily. Post-translationally, has been found to be hydroxylated and amidated by Han et al. (2006), and to be unmodified by Ju et al. (2022). Expressed by the venom duct.

Its subcellular location is the secreted. The polypeptide is Conotoxin mr3d (Conus marmoreus (Marble cone)).